The sequence spans 587 residues: DELLA protein GAIP-B (587 aa).

The disordered stretch occupies residues 1–23 (MKREHHHLHPRPDPPSMAAAPNG). The DELLA motif motif lies at 46–50 (DELLA). A GRAS domain is found at 209 to 577 (VDSQENGIQL…RPLIVTSAWK (369 aa)). Residues 216-270 (IQLVHALMACAEAVQQNNLNLAEALEKRIGYLAVSQAGAMRKVATFFAEALARRI) are leucine repeat I (LRI). Residues 288–353 (QLHFYESSPY…SGPPAFRLTG (66 aa)) form a VHIID region. The VHIID signature appears at 319–323 (VHVID). The leucine repeat II (LRII) stretch occupies residues 367-399 (DVGWKLAKLVETINVEFEYRGFVANSLADLDAS). The segment at 411–498 (VVVNSVFELH…EMYLGKQICN (88 aa)) is PFYRE. The LXXLL motif motif lies at 419-423 (LHKLL). The segment at 501 to 577 (ACEGSDRVEW…RPLIVTSAWK (77 aa)) is SAW.

It belongs to the GRAS family. DELLA subfamily. Phosphorylated. Post-translationally, ubiquitinated. Upon GA application it is ubiquitinated, leading to its subsequent degradation.

It localises to the nucleus. Probable transcriptional regulator that acts as a repressor of the gibberellin (GA) signaling pathway. Probably acts by participating in large multiprotein complexes that represses transcription of GA-inducible genes. Upon GA application, it is degraded by the proteasome, allowing the GA signaling pathway. This is DELLA protein GAIP-B (GAIPB) from Cucurbita maxima (Pumpkin).